We begin with the raw amino-acid sequence, 113 residues long: FK506-binding protein 1B (113 aa).

The PPIase FKBP-type domain occupies 19 to 113; the sequence is GQTVVIEYTG…IFDVYLKGLQ (95 aa).

The protein belongs to the FKBP-type PPIase family. FKBP1 subfamily.

It localises to the cytoplasm. The catalysed reaction is [protein]-peptidylproline (omega=180) = [protein]-peptidylproline (omega=0). With respect to regulation, inhibited by both FK506 and rapamycin. In terms of biological role, PPIases accelerate the folding of proteins. It catalyzes the cis-trans isomerization of proline imidic peptide bonds in oligopeptides. This Neurospora crassa (strain ATCC 24698 / 74-OR23-1A / CBS 708.71 / DSM 1257 / FGSC 987) protein is FK506-binding protein 1B (fkr-3).